Reading from the N-terminus, the 78-residue chain is Sec-independent protein translocase protein TatA (78 aa).

The chain crosses the membrane as a helical span at residues 1 to 21 (MFGRIGLPEILLILAIALIIF). The segment at 50–78 (EVNEVEEEVKENKSSDVKENEDNKTEKST) is disordered. The segment covering 59-78 (KENKSSDVKENEDNKTEKST) has biased composition (basic and acidic residues).

The protein belongs to the TatA/E family. In terms of assembly, forms a complex with TatC.

It is found in the cell membrane. In terms of biological role, part of the twin-arginine translocation (Tat) system that transports large folded proteins containing a characteristic twin-arginine motif in their signal peptide across membranes. TatA could form the protein-conducting channel of the Tat system. This chain is Sec-independent protein translocase protein TatA, found in Natranaerobius thermophilus (strain ATCC BAA-1301 / DSM 18059 / JW/NM-WN-LF).